Consider the following 106-residue polypeptide: ATP-dependent Clp protease adapter protein ClpS (106 aa).

A compositionally biased stretch (basic and acidic residues) spans 1 to 10 (MSQKTVHDQD). A disordered region spans residues 1-22 (MSQKTVHDQDNALLLETGNTKV).

This sequence belongs to the ClpS family. Binds to the N-terminal domain of the chaperone ClpA.

Its function is as follows. Involved in the modulation of the specificity of the ClpAP-mediated ATP-dependent protein degradation. This is ATP-dependent Clp protease adapter protein ClpS from Xylella fastidiosa (strain 9a5c).